The chain runs to 1679 residues: MRSMNCTTNNTNNTGQNTKNSLGSSFNSSNYTSYRFQTCLTDQIISEAQTWSLSSLFNFSWVVSYFVMGASRMIFRYGWYLATLSLLRIPKWIFFKLHHVQFTLSFWLILFALAVIVFVTYTIMKERILSQYKRLTPEFLPLENTGKSGSSANINAASTQSANAPPAIGSSTTGASSIIDSKKHSLKDGNENETFLSSYLDQFLSAIKIFGYLEKPVFHDLTKNMKTQKMDEGEILLLDSTIGFAIVVEGTLQLYHEVDHSDKDHGDETDHSDTDGLDDQDRDEEDEEEDDDIDNYDTKSCSSNLIDEEDESVGYIHLKNGLGNFQLLNTVKPGNPLTSLVSILNLFTHSMSSYGNSNFPSELSSPIDTTVSVNNMFCSSEQNFSNTDSMTNSTNSFPTFPSSMPKLVARAATDCTIGIIPPQSFAKLTAKYPRSASHIIQMVLTKLYHVTFQTAHDYLGLTKEIMDIEVLLNKSIVYELPYYLKEAVIRKFKTVDKSSGSADLEPKPKNSNASSKLKKPPKAKPSDGIIQSLKIANANANTSSNSLSLKPEFTHHPSSRHVVLGSRDQFNPGDLLSNVPLSRTMDILSPNPIHNNNRNKSNGINTSTSNQHKRSSRSSSNNASVHSKKFSSLSPELRNAQLSTSPLSLDNTSVHDHIHPSPVHLKGRVSPRPNLLPTTSFSAAQEETEDSALRMALVEAMLTYLGVNKSNMSVSSSSIANMSSLNSPQLNEMYSRRPSNASFLMSPHCTPSDISVASSFASPQTQPTMLRILPKEYTISNKRHNKSKSQDKKKPRAYKEELTPNLDFEDVKKDFAQGIQLKFFKKGTTIVEQNARGKGLFYIISGKVNVTTNSSSSVVSSMSKPEQVSAQSSHKGENPHHTQHLLYSVGSGGIVGYLSSLIGYKSFVNIVAKSDVYVGFLSSATLERLFDKYFLIYLRISDSLTKLLSSRLLKLDHALEWVHLRASETLFSQGDSANGIYVVLNGRLRQLQQQSLSNSNTSSEEVETQNIILGELAQGESFGEVEVLTAMNRYSTIVAVRDSELARIPRTLFELLALEHPSIMIRVSRLVAKKIVGDRTVPALTGDPLSIKENDFTSLIPPTKASYSSSLSHKPQNITSGTITFRTITILPITSGLPVEAFAMKLVQAFKQVGRTTIGLNQRTTLTHLGRHAFDRLSKLKQSGYFAELEEMYQTVVYISDTPVKSNWTRTCIAQGDCILLLADARSPSAEIGEYEKLLLNSKTTARTELILLHPERYVEPGLTHKWLRYRPWVHSHHHIQFSLTGTTLMNEGKMHVLNNGALALMDKLIQTEFSRKTQQNISKLLPDSIKNTVENFSSRFMKSKRQYYTPVHRHKNDFLRLARILSGQAIGLVLGGGGARGISHLGVIQAIEEQGIPVDVIGGTSIGSFVGGLYAKDYDLVPIYGRVKKFAGRISSIWRMLTDLTWPVTSYTTGHEFNRGIWKTFGDTRIEDFWIQYYCNSTNITDSVQEIHSFGYAWRYIRASMSLAGLLPPLEENGSMLLDGGYVDNLPVTEMRARGCQTIFAVDVGSADDRTPMEYGDSLNGFWIIFNRWNPFSSHPNIPNMAEIQVRLGYVASVNALEKAKNTPGVVYVRPPIEEYATLDFSKFEEIYHVGVDYGRIFLQGLIDDDKMPYIPGSQETTLNSQVPEFLLHRRNSI.

Positions 1–20 (MRSMNCTTNNTNNTGQNTKN) are enriched in low complexity. The disordered stretch occupies residues 1–21 (MRSMNCTTNNTNNTGQNTKNS). Residues 1–49 (MRSMNCTTNNTNNTGQNTKNSLGSSFNSSNYTSYRFQTCLTDQIISEAQ) lie on the Cytoplasmic side of the membrane. Residues 50–70 (TWSLSSLFNFSWVVSYFVMGA) traverse the membrane as a helical segment. The Lumenal portion of the chain corresponds to 71-103 (SRMIFRYGWYLATLSLLRIPKWIFFKLHHVQFT). A helical transmembrane segment spans residues 104 to 124 (LSFWLILFALAVIVFVTYTIM). Residues 125 to 1679 (KERILSQYKR…EFLLHRRNSI (1555 aa)) are Cytoplasmic-facing. The segment covering 261 to 274 (SDKDHGDETDHSDT) has biased composition (basic and acidic residues). The interval 261 to 304 (SDKDHGDETDHSDTDGLDDQDRDEEDEEEDDDIDNYDTKSCSSN) is disordered. Acidic residues predominate over residues 275–295 (DGLDDQDRDEEDEEEDDDIDN). Ser-300 and Ser-312 each carry phosphoserine. Disordered regions lie at residues 498–527 (SSGS…KPSD) and 586–672 (DILS…VSPR). Composition is skewed to polar residues over residues 592–606 (PIHN…GINT) and 630–652 (FSSL…LDNT). Ser-632, Ser-634, Ser-653, Ser-661, Ser-670, Ser-680, and Ser-739 each carry phosphoserine. Positions 775–800 (KEYTISNKRHNKSKSQDKKKPRAYKE) are disordered. Residues 788-800 (KSQDKKKPRAYKE) show a composition bias toward basic and acidic residues. Thr-803 bears the Phosphothreonine mark. A nucleoside 3',5'-cyclic phosphate contacts are provided by residues 803 to 947 (TPNL…LTKL) and 943 to 1074 (SLTK…VAKK). The interval 855–882 (SSSVVSSMSKPEQVSAQSSHKGENPHHT) is disordered. The span at 862 to 873 (MSKPEQVSAQSS) shows a compositional bias: polar residues. The region spanning 1373–1537 (LVLGGGGARG…VDNLPVTEMR (165 aa)) is the PNPLA domain. Residues 1377 to 1382 (GGGARG) carry the GXGXXG motif. Positions 1404 to 1408 (GTSIG) match the GXSXG motif. Ser-1406 acts as the Nucleophile in catalysis. Asp-1524 functions as the Proton acceptor in the catalytic mechanism. Positions 1524–1526 (DGG) match the DGA/G motif.

It belongs to the NTE family.

Its subcellular location is the endoplasmic reticulum membrane. It localises to the lipid droplet. The enzyme catalyses a 1-acyl-sn-glycero-3-phosphocholine + H2O = sn-glycerol 3-phosphocholine + a fatty acid + H(+). It carries out the reaction a 1,2-diacyl-sn-glycero-3-phosphocholine + 2 H2O = sn-glycerol 3-phosphocholine + 2 a carboxylate + 2 H(+). Its activity is regulated as follows. Positively regulated by SEC14. Inhibited by organophosphorus esters in the order phenyl saligenin phosphate (PSP) &gt; phenyldipentyl phosphinate (PDPP) = diisopropyl fluorophosphate (DFP) &gt; and paraoxon (PXN). Its function is as follows. Intracellular phospholipase B that catalyzes the double deacylation of phosphatidylcholine (PC) to glycerophosphocholine (GroPCho). Plays an important role in membrane lipid homeostasis. Responsible for the rapid PC turnover in response to inositol, elevated temperatures, or when choline is present in the growth medium. NTE1 activity impacts the repressing transcriptional activity of OPI1, the main regulator of phospholipid synthesis gene transcription. The polypeptide is Lysophospholipase NTE1 (NTE1) (Saccharomyces cerevisiae (strain ATCC 204508 / S288c) (Baker's yeast)).